We begin with the raw amino-acid sequence, 148 residues long: 3-hydroxyacyl-[acyl-carrier-protein] dehydratase FabZ (148 aa).

The active site involves histidine 55.

The protein belongs to the thioester dehydratase family. FabZ subfamily.

The protein localises to the cytoplasm. It carries out the reaction a (3R)-hydroxyacyl-[ACP] = a (2E)-enoyl-[ACP] + H2O. Functionally, involved in unsaturated fatty acids biosynthesis. Catalyzes the dehydration of short chain beta-hydroxyacyl-ACPs and long chain saturated and unsaturated beta-hydroxyacyl-ACPs. In Haemophilus influenzae (strain 86-028NP), this protein is 3-hydroxyacyl-[acyl-carrier-protein] dehydratase FabZ.